Here is a 365-residue protein sequence, read N- to C-terminus: Putative outer membrane porin protein NmpC (365 aa).

Residues 1 to 23 (MKKLTVAISAVAASVLMAMSAQA) form the signal peptide.

This sequence belongs to the Gram-negative porin family. Homotrimer.

Its subcellular location is the cell outer membrane. This is Putative outer membrane porin protein NmpC (nmpC) from Escherichia coli (strain K12).